The sequence spans 415 residues: Acetylornithine aminotransferase (415 aa).

Pyridoxal 5'-phosphate-binding positions include 115 to 116 (GA) and phenylalanine 148. Arginine 151 provides a ligand contact to N(2)-acetyl-L-ornithine. Pyridoxal 5'-phosphate is bound at residue 239–242 (DEVQ). Lysine 268 carries the N6-(pyridoxal phosphate)lysine modification. Serine 295 is a N(2)-acetyl-L-ornithine binding site. Threonine 296 provides a ligand contact to pyridoxal 5'-phosphate.

It belongs to the class-III pyridoxal-phosphate-dependent aminotransferase family. ArgD subfamily. Homodimer. Requires pyridoxal 5'-phosphate as cofactor.

It localises to the cytoplasm. The catalysed reaction is N(2)-acetyl-L-ornithine + 2-oxoglutarate = N-acetyl-L-glutamate 5-semialdehyde + L-glutamate. It participates in amino-acid biosynthesis; L-arginine biosynthesis; N(2)-acetyl-L-ornithine from L-glutamate: step 4/4. In Prochlorococcus marinus subsp. pastoris (strain CCMP1986 / NIES-2087 / MED4), this protein is Acetylornithine aminotransferase.